The following is a 315-amino-acid chain: Malate dehydrogenase (315 aa).

Residues G10–G15 and D34 contribute to the NAD(+) site. Substrate contacts are provided by R85 and R91. Residues N98 and L121–N123 each bind NAD(+). N123 and R154 together coordinate substrate. The active-site Proton acceptor is H178.

It belongs to the LDH/MDH superfamily. MDH type 3 family.

It carries out the reaction (S)-malate + NAD(+) = oxaloacetate + NADH + H(+). Its function is as follows. Catalyzes the reversible oxidation of malate to oxaloacetate. The protein is Malate dehydrogenase of Symbiobacterium thermophilum (strain DSM 24528 / JCM 14929 / IAM 14863 / T).